The primary structure comprises 651 residues: MHLEVIVQSYKKSKYYFSHTFYLYKFIVVNSPDMLHISRLGLFLGLFAIVMHSVNLIKYTSDPLEAFKTVNRHNWSDEQREHFYDLRNLYTSFCQTNLSLDCFTQILTNVFSWDIRDSQCKSAVSLSPLQNLPRTEIKIVLSSTTANKSIIASSFSLFYLLFATLSTYTADPPCVELLPFKILGAQLFDIKLTEESLRMAMSKFSNSNLTRSLTSFTSKNFFNYTSFVYFLLYNTTSCVPSNDQYFKQSPKPINVTTSFGRAIVNFDSILTTTPSSTSASLTSPHIPSTNIPTPAPPPVTKNSTKLHTDTIKVTPNTPTITTQTTESIKKIVKRSDFPRPMYTPTDIPTLTIRLNATIKTEQNTENPKSPPKPTNFENTTIRIPKTLESATATTNATQKIESTTFTTIGIKEINGNTYSSPKNSIYLKSKSQQSTTKFTDAEHTTPILKFTTWQNTVRTYMSHNTEVQNMTDKFQRTTLKSSNELPTIQTLSVTPKQKLPSNVTAKTEVHITNNALPSSNSSYSITEVTKEVKHTRMSASTHEQINHTEIAQITPILNAHTSEKSTTPQRSFTAETFLTTSSKPNIITWSNLLTTTPKEPLTNTSLRWTDHITTQLTTSNRTQSAKLTKANISSQTTNIYPQTITGRSTEV.

Residues 1-56 (MHLEVIVQSYKKSKYYFSHTFYLYKFIVVNSPDMLHISRLGLFLGLFAIVMHSVNL) form the signal peptide. N74, N97, N147, N208, N223, N234, and N254 each carry an N-linked (GlcNAc...) asparagine; by host glycan. Residues 275–292 (SSTSASLTSPHIPSTNIP) are compositionally biased toward low complexity. Residues 275-303 (SSTSASLTSPHIPSTNIPTPAPPPVTKNS) are disordered. Residues N302, N355, N378, N395, N469, N502, N520, N546, N603, N620, and N631 are each glycosylated (N-linked (GlcNAc...) asparagine; by host).

The protein belongs to the herpesviridae U47 family. Part of a gH-gL-gO complex. In terms of processing, a shorter mature protein, gO-80K, is produced probably by proteolytic cleavage. Modified with high mannose-oligosaccharides. Post-translationally, N-glycosylated with complex glycans.

The protein localises to the virion. It localises to the host cell membrane. This Human herpesvirus 6A (strain Uganda-1102) (HHV-6 variant A) protein is 120 kDa Glycoprotein O (U47).